The following is a 286-amino-acid chain: MIQDILHRYLFDNADVRGELVQLQDSYQQVIGSHAYPPVLQILLGELLAATSLLTATLKFSGDISVQLQGNGPVSLAVINGSNQQQLRGIARWDGELADDASLADLFGQGYMVITLTPDEGERYQGVVALDKPTLAACVEDYFNQSEQLPTALWLFADGKQAAGMFLQVLPSQEDHNADFEHLCQLTATIKAEELFTLEAQEVLHRLYHQEDVRLFDPIEVCFKCTCSRERSAAAIKTIDQAEVEAILAEDGKVEMGCEYCNAKYVFDGIDIAAIYANGTASNTQQ.

2 cysteine pairs are disulfide-bonded: cysteine 225-cysteine 227 and cysteine 258-cysteine 261.

It belongs to the HSP33 family. In terms of processing, under oxidizing conditions two disulfide bonds are formed involving the reactive cysteines. Under reducing conditions zinc is bound to the reactive cysteines and the protein is inactive.

The protein resides in the cytoplasm. Its function is as follows. Redox regulated molecular chaperone. Protects both thermally unfolding and oxidatively damaged proteins from irreversible aggregation. Plays an important role in the bacterial defense system toward oxidative stress. In Shewanella sp. (strain MR-4), this protein is 33 kDa chaperonin.